The chain runs to 703 residues: Arylphorin subunit beta (703 aa).

An N-terminal signal peptide occupies residues 1-16; that stretch reads MKTVIILAGLVALALG. 2 N-linked (GlcNAc...) asparagine glycosylation sites follow: asparagine 72 and asparagine 211.

The protein belongs to the hemocyanin family. As to quaternary structure, arylphorin is a hexamer of subunits alpha and beta. Fat body.

The protein localises to the secreted. It localises to the extracellular space. Arylphorin is a larval storage protein (LSP) which may serve as a storage protein used primarily as a source of aromatic amino acids for protein synthesis during metamorphosis. It is a constituent of the sclerotizing system of the cuticle, and serves as a carrier for ecdysteroid hormone. The sequence is that of Arylphorin subunit beta from Manduca sexta (Tobacco hawkmoth).